The sequence spans 673 residues: DNA ligase (673 aa).

NAD(+)-binding positions include Asp36 to Asp40, Ser85 to Leu86, and Glu116. Lys118 functions as the N6-AMP-lysine intermediate in the catalytic mechanism. Positions 139, 176, 291, and 315 each coordinate NAD(+). The Zn(2+) site is built by Cys409, Cys412, Cys427, and Cys433. The 82-residue stretch at Arg592–Arg673 folds into the BRCT domain.

This sequence belongs to the NAD-dependent DNA ligase family. LigA subfamily. Requires Mg(2+) as cofactor. The cofactor is Mn(2+).

It carries out the reaction NAD(+) + (deoxyribonucleotide)n-3'-hydroxyl + 5'-phospho-(deoxyribonucleotide)m = (deoxyribonucleotide)n+m + AMP + beta-nicotinamide D-nucleotide.. DNA ligase that catalyzes the formation of phosphodiester linkages between 5'-phosphoryl and 3'-hydroxyl groups in double-stranded DNA using NAD as a coenzyme and as the energy source for the reaction. It is essential for DNA replication and repair of damaged DNA. The chain is DNA ligase from Alkalilimnicola ehrlichii (strain ATCC BAA-1101 / DSM 17681 / MLHE-1).